Consider the following 512-residue polypeptide: Putative ankyrin repeat protein FPV233 (512 aa).

ANK repeat units lie at residues 45 to 73 (IPFIPLHQAIEARNIDIIKSIITVDNVNQ), 77 to 106 (DDTYPIHIICKEPNMLAISYMLRSINQCSV), 136 to 168 (IQDIDLKYIDKKSKDDIIEITKLLFSYGADINM), 172 to 201 (HGNSPLHYATENPDQRLTRLLLSKGANPNI), 205 to 236 (TNKSPLYYSIESDNPDITMLLIDKFIFNNTDP), 238 to 262 (LSHAIKHYRKPILHALIENGASINA), 266 to 296 (YGNTPLHYAVSYCKDIDVIKLLLERGVDVNA), and 301 to 329 (RNLTPLHSSYLKSPRVLKLLLQYGADINS).

The polypeptide is Putative ankyrin repeat protein FPV233 (Vertebrata (FPV)).